Reading from the N-terminus, the 602-residue chain is Translation initiation factor IF-2 (602 aa).

In terms of domain architecture, tr-type G spans 112–281 (KRAPIITIMG…LLLCEVLDLK (170 aa)). The interval 121–128 (GHVDHGKT) is G1. 121–128 (GHVDHGKT) provides a ligand contact to GTP. Positions 146–150 (GITQH) are G2. Positions 167 to 170 (DTPG) are G3. GTP contacts are provided by residues 167-171 (DTPGH) and 221-224 (NKMD). The tract at residues 221 to 224 (NKMD) is G4. The tract at residues 257–259 (SAL) is G5.

Belongs to the TRAFAC class translation factor GTPase superfamily. Classic translation factor GTPase family. IF-2 subfamily.

Its subcellular location is the cytoplasm. Functionally, one of the essential components for the initiation of protein synthesis. Protects formylmethionyl-tRNA from spontaneous hydrolysis and promotes its binding to the 30S ribosomal subunits. Also involved in the hydrolysis of GTP during the formation of the 70S ribosomal complex. This chain is Translation initiation factor IF-2, found in Mycoplasmopsis synoviae (strain 53) (Mycoplasma synoviae).